The chain runs to 267 residues: MSHIGVAFDKARAEGRAVLVGCMPAGFPTVEGSIAAMTAMVEAGVDVIEVEIPYSDPVMDGPVIQRASDIALAGGVRVADTLRIIEAVAATGVPVVTMTYWNPVEQYGVDAFARDLAAAGGTGLITPDLIPDEAQEWLAASDAHGLDRTFLVAPSSTDTRLEMTVEHCRGFVYATALMGVTGARTQASAAAPVLVSRVRGVTDLPVGVGLGTGTGAQASTVAGFADGVIVGSALIRCLLDAPSLPAGLTALRALSAELAAGVRTPAH.

Residues Glu-49 and Asp-60 each act as proton acceptor in the active site.

It belongs to the TrpA family. In terms of assembly, tetramer of two alpha and two beta chains.

It catalyses the reaction (1S,2R)-1-C-(indol-3-yl)glycerol 3-phosphate + L-serine = D-glyceraldehyde 3-phosphate + L-tryptophan + H2O. It participates in amino-acid biosynthesis; L-tryptophan biosynthesis; L-tryptophan from chorismate: step 5/5. In terms of biological role, the alpha subunit is responsible for the aldol cleavage of indoleglycerol phosphate to indole and glyceraldehyde 3-phosphate. In Salinispora arenicola (strain CNS-205), this protein is Tryptophan synthase alpha chain.